A 456-amino-acid polypeptide reads, in one-letter code: Bifunctional protein GlmU (456 aa).

A pyrophosphorylase region spans residues 1–229 (MTKKALSAVI…VMEVEGANNR (229 aa)). Residues 11–14 (LAAG), Lys25, Gln76, 81–82 (GT), 103–105 (YGD), Gly140, Glu154, Asn169, and Asn227 contribute to the UDP-N-acetyl-alpha-D-glucosamine site. Asp105 serves as a coordination point for Mg(2+). Position 227 (Asn227) interacts with Mg(2+). Residues 230–250 (LQLAALERYFQNKQASKLLLE) form a linker region. The N-acetyltransferase stretch occupies residues 251 to 456 (GVMIYDPARF…QGWQRPIKKK (206 aa)). 2 residues coordinate UDP-N-acetyl-alpha-D-glucosamine: Arg333 and Lys351. Residue His363 is the Proton acceptor of the active site. Residues Tyr366 and Asn377 each coordinate UDP-N-acetyl-alpha-D-glucosamine. Residues Ala380, 386 to 387 (NY), Ser405, Ala423, and Arg440 contribute to the acetyl-CoA site.

It in the N-terminal section; belongs to the N-acetylglucosamine-1-phosphate uridyltransferase family. The protein in the C-terminal section; belongs to the transferase hexapeptide repeat family. In terms of assembly, homotrimer. Mg(2+) is required as a cofactor.

The protein localises to the cytoplasm. It catalyses the reaction alpha-D-glucosamine 1-phosphate + acetyl-CoA = N-acetyl-alpha-D-glucosamine 1-phosphate + CoA + H(+). The enzyme catalyses N-acetyl-alpha-D-glucosamine 1-phosphate + UTP + H(+) = UDP-N-acetyl-alpha-D-glucosamine + diphosphate. Its pathway is nucleotide-sugar biosynthesis; UDP-N-acetyl-alpha-D-glucosamine biosynthesis; N-acetyl-alpha-D-glucosamine 1-phosphate from alpha-D-glucosamine 6-phosphate (route II): step 2/2. The protein operates within nucleotide-sugar biosynthesis; UDP-N-acetyl-alpha-D-glucosamine biosynthesis; UDP-N-acetyl-alpha-D-glucosamine from N-acetyl-alpha-D-glucosamine 1-phosphate: step 1/1. It functions in the pathway bacterial outer membrane biogenesis; LPS lipid A biosynthesis. Its function is as follows. Catalyzes the last two sequential reactions in the de novo biosynthetic pathway for UDP-N-acetylglucosamine (UDP-GlcNAc). The C-terminal domain catalyzes the transfer of acetyl group from acetyl coenzyme A to glucosamine-1-phosphate (GlcN-1-P) to produce N-acetylglucosamine-1-phosphate (GlcNAc-1-P), which is converted into UDP-GlcNAc by the transfer of uridine 5-monophosphate (from uridine 5-triphosphate), a reaction catalyzed by the N-terminal domain. This chain is Bifunctional protein GlmU, found in Haemophilus influenzae (strain ATCC 51907 / DSM 11121 / KW20 / Rd).